Here is a 260-residue protein sequence, read N- to C-terminus: Creatinine amidohydrolase (260 aa).

E34 serves as a coordination point for Mn(2+). Zn(2+) is bound by residues E34, H36, and D45. Mn(2+) is bound at residue D45. S78 contributes to the creatine binding site. H120 provides a ligand contact to Mn(2+). Zn(2+) is bound at residue H120. Y121, W174, D175, and H178 together coordinate creatine. Residue E183 participates in Zn(2+) binding.

Belongs to the creatininase superfamily. Homohexamer; trimer of dimers. It depends on Zn(2+) as a cofactor. Requires Mn(2+) as cofactor.

The catalysed reaction is creatinine + H2O = creatine. It participates in amine and polyamine degradation; creatinine degradation. Is markedly inactivated in vitro by heavy metal ions, N-bromosuccinimide, ethoxyformic anhydride, and dye-sensitized photooxidation. Cyclic amidohydrolase that catalyzes the reversible conversion of creatinine to creatine. Is also active toward glycocyamidine, though the reaction rate is very low, but it is completely inert toward hydantoin and its derivatives. The chain is Creatinine amidohydrolase (crnA) from Pseudomonas putida (Arthrobacter siderocapsulatus).